The chain runs to 353 residues: Heterogeneous nuclear ribonucleoprotein D0 (353 aa).

The interval 1–89 (MSEEQFGGDG…SSPRHTEAAT (89 aa)) is disordered. Serine 2 bears the N-acetylserine mark. Over residues 11-42 (AAAAATAAVGGSAGEQEGAMVAAAQGAAAAAG) the composition is skewed to low complexity. Residues 43-56 (SGSGGGSAPGGTEG) show a composition bias toward gly residues. Basic and acidic residues predominate over residues 62-71 (EGAKIDASKN). A Phosphoserine modification is found at serine 69. Lysine 70 is covalently cross-linked (Glycyl lysine isopeptide (Lys-Gly) (interchain with G-Cter in SUMO2)). Serine 78, serine 80, and serine 81 each carry phosphoserine. At threonine 89 the chain carries Phosphothreonine. 2 consecutive RRM domains span residues 95 to 177 (WKMF…KTKE) and 180 to 259 (KKIF…MSKE). Position 117 is an N6-methyllysine (lysine 117). Phosphothreonine is present on threonine 125. Lysine 127 is covalently cross-linked (Glycyl lysine isopeptide (Lys-Gly) (interchain with G-Cter in SUMO2)). Position 163 is an N6-acetyllysine (lysine 163). Serine 188 is subject to Phosphoserine. Residue threonine 191 is modified to Phosphothreonine. A Glycyl lysine isopeptide (Lys-Gly) (interchain with G-Cter in SUMO2) cross-link involves residue lysine 195. An N6-acetyllysine mark is found at lysine 241 and lysine 249. Serine 269 carries the phosphoserine modification. Omega-N-methylarginine occurs at positions 270, 276, 278, and 280. Asymmetric dimethylarginine; alternate is present on arginine 343. Position 343 is a dimethylated arginine; alternate (arginine 343). Omega-N-methylarginine; alternate is present on arginine 343.

Identified in a IGF2BP1-dependent mRNP granule complex containing untranslated mRNAs. Part of a complex associated with the FOS mCRD domain and consisting of PABPC1, PAIP1, CSDE1/UNR and SYNCRIP. Interacts with IGF2BP2. Interacts with GTPBP1. Interacts with EIF4G1; the interaction requires RNA. Interacts with EIF3B and RPS3. In terms of processing, methylated by PRMT1, in an insulin-dependent manner. The PRMT1-mediated methylation regulates its phosphorylation. Arg-343 is dimethylated, probably to asymmetric dimethylarginine.

The protein localises to the nucleus. The protein resides in the cytoplasm. In terms of biological role, binds with high affinity to RNA molecules that contain AU-rich elements (AREs) found within the 3'-UTR of many proto-oncogenes and cytokine mRNAs. Also binds to double- and single-stranded DNA sequences in a specific manner and functions a transcription factor. Each of the RNA-binding domains specifically can bind solely to a single-stranded non-monotonous 5'-UUAG-3' sequence and also weaker to the single-stranded 5'-TTAGGG-3' telomeric DNA repeat. Binds RNA oligonucleotides with 5'-UUAGGG-3' repeats more tightly than the telomeric single-stranded DNA 5'-TTAGGG-3' repeats. Binding of RRM1 to DNA inhibits the formation of DNA quadruplex structure which may play a role in telomere elongation. May be involved in translationally coupled mRNA turnover. Implicated with other RNA-binding proteins in the cytoplasmic deadenylation/translational and decay interplay of the FOS mRNA mediated by the major coding-region determinant of instability (mCRD) domain. May play a role in the regulation of the rhythmic expression of circadian clock core genes. Directly binds to the 3'UTR of CRY1 mRNA and induces CRY1 rhythmic translation. May also be involved in the regulation of PER2 translation. This Rattus norvegicus (Rat) protein is Heterogeneous nuclear ribonucleoprotein D0 (Hnrnpd).